A 146-amino-acid polypeptide reads, in one-letter code: Large ribosomal subunit protein uL15 (146 aa).

The segment at 1–66 (MKLHELKPAP…LQRRMPKRGF (66 aa)) is disordered. Gly residues-rich tracts occupy residues 21-31 (QGIGSGMGKTA) and 42-52 (SGGGVRPGFEG).

The protein belongs to the universal ribosomal protein uL15 family. As to quaternary structure, part of the 50S ribosomal subunit.

Its function is as follows. Binds to the 23S rRNA. The sequence is that of Large ribosomal subunit protein uL15 from Pelotomaculum thermopropionicum (strain DSM 13744 / JCM 10971 / SI).